The chain runs to 89 residues: Small ribosomal subunit protein uS15 (89 aa).

This sequence belongs to the universal ribosomal protein uS15 family. Part of the 30S ribosomal subunit. Forms a bridge to the 50S subunit in the 70S ribosome, contacting the 23S rRNA.

Its function is as follows. One of the primary rRNA binding proteins, it binds directly to 16S rRNA where it helps nucleate assembly of the platform of the 30S subunit by binding and bridging several RNA helices of the 16S rRNA. Functionally, forms an intersubunit bridge (bridge B4) with the 23S rRNA of the 50S subunit in the ribosome. This chain is Small ribosomal subunit protein uS15, found in Prochlorococcus marinus subsp. pastoris (strain CCMP1986 / NIES-2087 / MED4).